We begin with the raw amino-acid sequence, 223 residues long: MTSNQLAQYIDHTALTAEKNEQDISTLCNEAIEHGFYSVCINSGYIPLAKEKLAGSNVKICTVVGFPLGANLTSVKAFETQEAIKAGANEIDMVINVGWIKSQKWDEVKQDIQAVFNACNGTPLKVILETCLLTKDEIVKACEICKEIGVAFVKTSTGFNKGGATVEDVALMKQTVGNIGVKASGGVRDTETALAMIKAGATRIGASAGIAIISGTQDTQSTY.

Residue Asp-92 is the Proton donor/acceptor of the active site. Lys-154 functions as the Schiff-base intermediate with acetaldehyde in the catalytic mechanism. Lys-182 functions as the Proton donor/acceptor in the catalytic mechanism.

This sequence belongs to the DeoC/FbaB aldolase family. DeoC type 1 subfamily.

The protein resides in the cytoplasm. It catalyses the reaction 2-deoxy-D-ribose 5-phosphate = D-glyceraldehyde 3-phosphate + acetaldehyde. Its pathway is carbohydrate degradation; 2-deoxy-D-ribose 1-phosphate degradation; D-glyceraldehyde 3-phosphate and acetaldehyde from 2-deoxy-alpha-D-ribose 1-phosphate: step 2/2. Functionally, catalyzes a reversible aldol reaction between acetaldehyde and D-glyceraldehyde 3-phosphate to generate 2-deoxy-D-ribose 5-phosphate. This is Deoxyribose-phosphate aldolase from Haemophilus influenzae (strain PittEE).